Consider the following 914-residue polypeptide: Sensor protein TorS (914 aa).

The Cytoplasmic portion of the chain corresponds to 1 to 8 (MNLTLTRR). The chain crosses the membrane as a helical span at residues 9–29 (LWMGFALMALLTLTSTLVGWY). Residues 30–332 (NLRFISQVEK…EKASARGQYS (303 aa)) lie on the Periplasmic side of the membrane. A helical membrane pass occupies residues 333–353 (LLLLGMVSLCALILILWRVVY). The 54-residue stretch at 354 to 407 (RSVTRPLAEQTQALQRLLDGDIDSPFPETAGVRELDTIGRLMDAFRSNVHALNR) folds into the HAMP domain. Topologically, residues 354 to 914 (RSVTRPLAEQ…WLHKKDLNAI (561 aa)) are cytoplasmic. Positions 450 to 664 (AMSHEIRTPL…CFCLRLPLRV (215 aa)) constitute a Histidine kinase domain. Histidine 453 carries the post-translational modification Phosphohistidine; by autocatalysis. Residues 683–798 (RLLLIEDNPL…VLGQLLAHYL (116 aa)) enclose the Response regulatory domain. Aspartate 733 is modified (4-aspartylphosphate). The HPt domain occupies 821-914 (GTEKIHEWLV…WLHKKDLNAI (94 aa)). Histidine 860 bears the Phosphohistidine mark.

As to quaternary structure, may form homomultimers. Seems to interact with TorT and TorC apocytochrome. Activation requires a sequential transfer of a phosphate group from a His in the primary transmitter domain, to an Asp in the receiver domain and to a His in the secondary transmitter domain.

It localises to the cell inner membrane. The catalysed reaction is ATP + protein L-histidine = ADP + protein N-phospho-L-histidine.. With respect to regulation, inhibited by TorC apocytochrome. In terms of biological role, member of the two-component regulatory system TorS/TorR involved in the anaerobic utilization of trimethylamine-N-oxide (TMAO). Detects the presence of TMAO in the medium and, in response, activates TorR via a four-step phosphorelay. When TMAO is removed, TorS can dephosphorylate TorR, probably by a reverse phosphorelay involving His-860 and Asp-733. In Escherichia coli (strain K12), this protein is Sensor protein TorS (torS).